The following is a 439-amino-acid chain: Adenylosuccinate synthetase (439 aa).

Residues 12–18 and 40–42 each bind GTP; these read GDEGKGK and GHT. Asp13 acts as the Proton acceptor in catalysis. Positions 13 and 40 each coordinate Mg(2+). Residues 13-16, 38-41, Thr137, Arg151, Gln232, Thr247, and Arg311 each bind IMP; these read DEGK and NAGH. Residue His41 is the Proton donor of the active site. 307–313 lines the substrate pocket; sequence ATTGRPR. GTP contacts are provided by residues Arg313, 339-341, and 421-423; these read KLD and SNG.

This sequence belongs to the adenylosuccinate synthetase family. As to quaternary structure, homodimer. It depends on Mg(2+) as a cofactor.

The protein localises to the cytoplasm. The catalysed reaction is IMP + L-aspartate + GTP = N(6)-(1,2-dicarboxyethyl)-AMP + GDP + phosphate + 2 H(+). It participates in purine metabolism; AMP biosynthesis via de novo pathway; AMP from IMP: step 1/2. Its function is as follows. Plays an important role in the de novo pathway of purine nucleotide biosynthesis. Catalyzes the first committed step in the biosynthesis of AMP from IMP. This chain is Adenylosuccinate synthetase, found in Salinibacter ruber (strain DSM 13855 / M31).